Reading from the N-terminus, the 550-residue chain is Chaperonin GroEL 1 (550 aa).

ATP-binding positions include 30–33, Lys-51, 87–91, Gly-415, and Asp-496; these read TLGP and DGTTT.

It belongs to the chaperonin (HSP60) family. As to quaternary structure, forms a cylinder of 14 subunits composed of two heptameric rings stacked back-to-back. Interacts with the co-chaperonin GroES.

The protein localises to the cytoplasm. It catalyses the reaction ATP + H2O + a folded polypeptide = ADP + phosphate + an unfolded polypeptide.. Its function is as follows. Together with its co-chaperonin GroES, plays an essential role in assisting protein folding. The GroEL-GroES system forms a nano-cage that allows encapsulation of the non-native substrate proteins and provides a physical environment optimized to promote and accelerate protein folding. In Rhodopseudomonas palustris (strain HaA2), this protein is Chaperonin GroEL 1.